The sequence spans 362 residues: Resuscitation-promoting factor RpfB (362 aa).

Residues 1-22 form the signal peptide; sequence MLRGVVGAFLVSLTVAGSYAVA. One can recognise a G5 domain in the interval 192-272; the sequence is VTRMRIEKVT…NGVLRVGAKP (81 aa).

Belongs to the transglycosylase family. Rpf subfamily.

Its function is as follows. Factor that stimulates resuscitation of dormant cells. Has peptidoglycan (PG) hydrolytic activity. Active in the pM concentration range. Has little to no effect on actively-growing cells. PG fragments could either directly activate the resuscitation pathway of dormant bacteria or serve as a substrate for endogenous Rpf, resulting in low molecular weight products with resuscitation activity. The protein is Resuscitation-promoting factor RpfB (rpfB) of Mycolicibacterium smegmatis (strain ATCC 700084 / mc(2)155) (Mycobacterium smegmatis).